The primary structure comprises 170 residues: Adenine phosphoribosyltransferase (170 aa).

This sequence belongs to the purine/pyrimidine phosphoribosyltransferase family. In terms of assembly, homodimer.

The protein resides in the cytoplasm. It catalyses the reaction AMP + diphosphate = 5-phospho-alpha-D-ribose 1-diphosphate + adenine. Its pathway is purine metabolism; AMP biosynthesis via salvage pathway; AMP from adenine: step 1/1. Catalyzes a salvage reaction resulting in the formation of AMP, that is energically less costly than de novo synthesis. This is Adenine phosphoribosyltransferase from Thermotoga petrophila (strain ATCC BAA-488 / DSM 13995 / JCM 10881 / RKU-1).